We begin with the raw amino-acid sequence, 333 residues long: Endo-1,4-beta-xylanase (333 aa).

The signal sequence occupies residues 1 to 17 (MYLVAFMLLAILPTGYC). The 313-residue stretch at 18–330 (QLNTLAVRAG…KPAYQGIVDG (313 aa)) folds into the GH10 domain. The active-site Proton donor is the E147. E252 functions as the Nucleophile in the catalytic mechanism.

The protein belongs to the glycosyl hydrolase 10 (cellulase F) family.

It localises to the secreted. It catalyses the reaction Endohydrolysis of (1-&gt;4)-beta-D-xylosidic linkages in xylans.. It participates in glycan degradation; xylan degradation. Has xylanase activity. Seems to be involved in the release of sugars from the hemicellulolytic fraction in the compost. This Agaricus bisporus (White button mushroom) protein is Endo-1,4-beta-xylanase (xlnA).